We begin with the raw amino-acid sequence, 863 residues long: NACHT, LRR and PYD domains-containing protein 4B (863 aa).

The Pyrin domain maps to 1–93 (MASLFSDFGF…TNRATGEIAA (93 aa)). The region spanning 143 to 466 (KMVVLQGVAG…FYLLHSEMDH (324 aa)) is the NACHT domain. ATP is bound at residue 149–156 (GVAGIGKT). LRR repeat units lie at residues 618–643 (WHQI…IFNE), 683–706 (SYNL…MLCD), 717–740 (ILDL…LRQN), 741–763 (KSLR…ALCR), 765–782 (LTLP…ACQL), 797–824 (YKCL…AMKD), and 843–863 (SQEF…ENGV).

The protein belongs to the NLRP family.

Functionally, may be involved in inflammation and recognition of cytosolic pathogen-associated molecular patterns (PAMPs) not intercepted by membrane-bound receptors. The protein is NACHT, LRR and PYD domains-containing protein 4B (Nlrp4b) of Mus musculus (Mouse).